The following is a 212-amino-acid chain: Ubiquitin-like protein MDY2 (212 aa).

A Ubiquitin-like domain is found at 74-152 (VHLTLKKIQA…TITVMIKPNP (79 aa)). A disordered region spans residues 150–177 (PNPTISKEPEAEKSTNSPAPAPPQELTV).

As to quaternary structure, interacts with GET4.

The protein resides in the cytoplasm. Its subcellular location is the cytosol. It localises to the nucleus. Required for efficient mating. Involved in the production of alpha-factor, the KAR9 and TUB1 location to the shmoo tip and nuclear migration into pheromone-induced shmoos. The sequence is that of Ubiquitin-like protein MDY2 (MDY2) from Saccharomyces cerevisiae (strain ATCC 204508 / S288c) (Baker's yeast).